Consider the following 379-residue polypeptide: Cytochrome b (379 aa).

The next 4 helical transmembrane spans lie at 33-53, 77-98, 113-133, and 178-198; these read FGSL…FLAM, WFLR…YLHI, WNVG…GYVL, and FFTF…IHLL. Heme b is bound by residues His83 and His97. 2 residues coordinate heme b: His182 and His196. His201 serves as a coordination point for a ubiquinone. Transmembrane regions (helical) follow at residues 226 to 246, 288 to 308, 320 to 340, and 347 to 367; these read YKDL…TLFS, LGGV…PITH, LTQI…WIGG, and FIII…VFAP.

The protein belongs to the cytochrome b family. In terms of assembly, the cytochrome bc1 complex contains 3 respiratory subunits (MT-CYB, CYC1 and UQCRFS1), 2 core proteins (UQCRC1 and UQCRC2) and probably 6 low-molecular weight proteins. Heme b is required as a cofactor.

The protein resides in the mitochondrion inner membrane. In terms of biological role, component of the ubiquinol-cytochrome c reductase complex (complex III or cytochrome b-c1 complex) that is part of the mitochondrial respiratory chain. The b-c1 complex mediates electron transfer from ubiquinol to cytochrome c. Contributes to the generation of a proton gradient across the mitochondrial membrane that is then used for ATP synthesis. The protein is Cytochrome b (mt-cyb) of Amia calva (Bowfin).